A 591-amino-acid polypeptide reads, in one-letter code: Probable lysosomal cobalamin transporter (591 aa).

5 helical membrane passes run 8 to 28 (LIWV…STFV), 39 to 59 (AAVT…VLLI), 95 to 115 (IVYY…IPFT), 144 to 164 (WTLG…FVPF), and 198 to 218 (FLIT…MALL). The tract at residues 238–266 (TASQLETNRERQRQLEGRNEGREGGLDSR) is disordered. A compositionally biased stretch (basic and acidic residues) spans 244–266 (TNRERQRQLEGRNEGREGGLDSR). A run of 4 helical transmembrane segments spans residues 315–335 (LIGG…MLIT), 378–398 (VLFL…IATA), 422–442 (MATV…AMVV), and 509–529 (FFGI…LIVF).

This sequence belongs to the LIMR family. LMBRD1 subfamily.

Its subcellular location is the lysosome membrane. Functionally, probable lysosomal cobalamin transporter. Required to export cobalamin from lysosomes allowing its conversion to cofactors. The sequence is that of Probable lysosomal cobalamin transporter from Pyrenophora tritici-repentis (strain Pt-1C-BFP) (Wheat tan spot fungus).